The primary structure comprises 98 residues: Aspartyl/glutamyl-tRNA(Asn/Gln) amidotransferase subunit C (98 aa).

The protein belongs to the GatC family. In terms of assembly, heterotrimer of A, B and C subunits.

The catalysed reaction is L-glutamyl-tRNA(Gln) + L-glutamine + ATP + H2O = L-glutaminyl-tRNA(Gln) + L-glutamate + ADP + phosphate + H(+). The enzyme catalyses L-aspartyl-tRNA(Asn) + L-glutamine + ATP + H2O = L-asparaginyl-tRNA(Asn) + L-glutamate + ADP + phosphate + 2 H(+). Allows the formation of correctly charged Asn-tRNA(Asn) or Gln-tRNA(Gln) through the transamidation of misacylated Asp-tRNA(Asn) or Glu-tRNA(Gln) in organisms which lack either or both of asparaginyl-tRNA or glutaminyl-tRNA synthetases. The reaction takes place in the presence of glutamine and ATP through an activated phospho-Asp-tRNA(Asn) or phospho-Glu-tRNA(Gln). In Gloeothece citriformis (strain PCC 7424) (Cyanothece sp. (strain PCC 7424)), this protein is Aspartyl/glutamyl-tRNA(Asn/Gln) amidotransferase subunit C.